A 150-amino-acid chain; its full sequence is Catabolic 3-dehydroquinase 1 (150 aa).

The Proton acceptor role is filled by tyrosine 24. Substrate-binding residues include asparagine 75, histidine 81, and aspartate 88. The active-site Proton donor is histidine 101. Residues 102-103 (VS) and arginine 112 contribute to the substrate site.

This sequence belongs to the type-II 3-dehydroquinase family. As to quaternary structure, homododecamer. Adopts a ring-like structure, composed of an arrangement of two hexameric rings stacked on top of one another.

The catalysed reaction is 3-dehydroquinate = 3-dehydroshikimate + H2O. Its pathway is aromatic compound metabolism; 3,4-dihydroxybenzoate biosynthesis; 3,4-dihydroxybenzoate from 3-dehydroquinate: step 1/2. In terms of biological role, is involved in the catabolism of quinate. Allows the utilization of quinate as carbon source via the beta-ketoadipate pathway. This chain is Catabolic 3-dehydroquinase 1, found in Neosartorya fischeri (strain ATCC 1020 / DSM 3700 / CBS 544.65 / FGSC A1164 / JCM 1740 / NRRL 181 / WB 181) (Aspergillus fischerianus).